A 721-amino-acid chain; its full sequence is Homeobox-leucine zipper protein HDG2 (721 aa).

Residues 17-70 (NNHNYNHEDNNNEGFLRDDEFDSPNTKSGSENQEGGSGNDQDPLHPNKKKRYHR) form a disordered region. The segment covering 21 to 34 (YNHEDNNNEGFLRD) has biased composition (basic and acidic residues). Residues 64–123 (KKKRYHRHTQLQIQEMEAFFKECPHPDDKQRKQLSRELNLEPLQVKFWFQNKRTQMKNHH) constitute a DNA-binding region (homeobox). The stretch at 120–194 (KNHHERHENS…DRISAIAAKY (75 aa)) forms a coiled coil. Residues 242 to 468 (TESDKPVIID…LDRQCERLAS (227 aa)) enclose the START domain.

This sequence belongs to the HD-ZIP homeobox family. Class IV subfamily. In terms of assembly, interacts with AIL7/PLT7, ANT, BBM and AIL1. In terms of tissue distribution, expressed in hairless cell files of the hypocotyl epidermis. Expressed in shoot apical meristem (SAM) with higher levels in L1 cells and the epidermal layer of young leaves. Expressed in primary root tips, in the L1 of apical inflorescence meristems, early flower primordia, carpel epidermis, ovule primordia, nucellus, chalaze and seed coat.

It is found in the nucleus. In terms of biological role, probable transcription factor. Involved, together with PDF2, in the regulation of flower organs development by promoting the expression of APETALA 3 (AP3) in the epidermis and internal cell layers of developing flowers. This is Homeobox-leucine zipper protein HDG2 from Arabidopsis thaliana (Mouse-ear cress).